Reading from the N-terminus, the 737-residue chain is Polyribonucleotide nucleotidyltransferase (737 aa).

Residues D489 and D495 each contribute to the Mg(2+) site. The KH domain occupies 556-615; that stretch reads PKIDTIKIDVDKIKIVIGKGGETIDKIIAETGVKIDIDEEGNVSIYSSDQDAINRAKEII. Residues 625-693 enclose the S1 motif domain; that stretch reads DEVYRAKVVR…EKGRIDASMK (69 aa). Residues 691 to 737 form a disordered region; sequence SMKALLPRPPKPEHDEKGEKSERPHRPRHHKDHKPKKEFTETPKDSE. Positions 700–714 are enriched in basic and acidic residues; it reads PKPEHDEKGEKSERP. Positions 715–724 are enriched in basic residues; that stretch reads HRPRHHKDHK. Over residues 725–737 the composition is skewed to basic and acidic residues; the sequence is PKKEFTETPKDSE.

The protein belongs to the polyribonucleotide nucleotidyltransferase family. It depends on Mg(2+) as a cofactor.

Its subcellular location is the cytoplasm. It carries out the reaction RNA(n+1) + phosphate = RNA(n) + a ribonucleoside 5'-diphosphate. Functionally, involved in mRNA degradation. Catalyzes the phosphorolysis of single-stranded polyribonucleotides processively in the 3'- to 5'-direction. The sequence is that of Polyribonucleotide nucleotidyltransferase from Streptococcus pneumoniae (strain Taiwan19F-14).